A 60-amino-acid polypeptide reads, in one-letter code: Large ribosomal subunit protein bL32 (60 aa).

Belongs to the bacterial ribosomal protein bL32 family.

This Streptococcus sanguinis (strain SK36) protein is Large ribosomal subunit protein bL32.